Consider the following 193-residue polypeptide: DNA damage-inducible transcript 4-like protein (193 aa).

This sequence belongs to the DDIT4 family.

It is found in the cytoplasm. In terms of biological role, inhibits cell growth by regulating the TOR signaling pathway upstream of the TSC1-TSC2 complex and downstream of AKT1. The chain is DNA damage-inducible transcript 4-like protein (DDIT4L) from Pongo abelii (Sumatran orangutan).